The primary structure comprises 223 residues: Probable Ras-related protein Rab-4A (223 aa).

A GTP-binding site is contributed by 16 to 23 (GNAGTGKT). Residues 38–46 (TQHTIGAEF) carry the Effector region motif. Residues 64–68 (DTAGQ) and 122–125 (NKKD) contribute to the GTP site. S-geranylgeranyl cysteine attachment occurs at residues cysteine 221 and cysteine 223. At cysteine 223 the chain carries Cysteine methyl ester.

Belongs to the small GTPase superfamily. Rab family.

Its subcellular location is the cell membrane. Protein transport. Probably involved in vesicular traffic. The protein is Probable Ras-related protein Rab-4A of Echinococcus multilocularis (Fox tapeworm).